Here is a 392-residue protein sequence, read N- to C-terminus: GTPase Obg (392 aa).

The 159-residue stretch at 1–159 (MKFIDEALIR…RDLQLELMLL (159 aa)) folds into the Obg domain. Residues 160-333 (ADVGMLGLPN…LCRDIMDFIE (174 aa)) enclose the OBG-type G domain. GTP-binding positions include 166-173 (GLPNAGKS), 191-195 (FTTLV), 213-216 (DIPG), 283-286 (NKID), and 314-316 (SAA). Mg(2+) contacts are provided by S173 and T193. Positions 361 to 392 (SEQVFTEDDQEEDDWDDWSEDDEEGVEIIYKP) are disordered. Residues 365 to 386 (FTEDDQEEDDWDDWSEDDEEGV) are compositionally biased toward acidic residues.

This sequence belongs to the TRAFAC class OBG-HflX-like GTPase superfamily. OBG GTPase family. In terms of assembly, monomer. Requires Mg(2+) as cofactor.

Its subcellular location is the cytoplasm. In terms of biological role, an essential GTPase which binds GTP, GDP and possibly (p)ppGpp with moderate affinity, with high nucleotide exchange rates and a fairly low GTP hydrolysis rate. Plays a role in control of the cell cycle, stress response, ribosome biogenesis and in those bacteria that undergo differentiation, in morphogenesis control. The protein is GTPase Obg of Histophilus somni (strain 2336) (Haemophilus somnus).